A 246-amino-acid chain; its full sequence is MKKIAFHIQKGGVGKTTLSGNIASYLSKTKKVILVDCDIQQASSSTWFLNHEILKLDIKDFLLKKMDVDQVVRQIQKNFYILPCVPSGTFRRDVQHELQDFPYLIDDFCLELEKLGFEFAIFDLSPSFELWERRIILAMCEVITPLTPEFLSLEGINIFKEEFESLLKSYRKKVKHEKIICNMLNKSFKRHNLHLRQFKTFGYDLYEVGQDAKIAESQLYKKSIFDYYPESRSVLELSRLGDALCL.

This is an uncharacterized protein from Borreliella burgdorferi (strain ATCC 35210 / DSM 4680 / CIP 102532 / B31) (Borrelia burgdorferi).